We begin with the raw amino-acid sequence, 632 residues long: 1-deoxy-D-xylulose-5-phosphate synthase (632 aa).

Residues His78 and 119 to 121 each bind thiamine diphosphate; that span reads AHS. A Mg(2+)-binding site is contributed by Asp150. Thiamine diphosphate-binding positions include 151-152, Asn179, Tyr286, and Glu368; that span reads GA. A Mg(2+)-binding site is contributed by Asn179.

Belongs to the transketolase family. DXPS subfamily. As to quaternary structure, homodimer. The cofactor is Mg(2+). Thiamine diphosphate serves as cofactor.

It catalyses the reaction D-glyceraldehyde 3-phosphate + pyruvate + H(+) = 1-deoxy-D-xylulose 5-phosphate + CO2. The protein operates within metabolic intermediate biosynthesis; 1-deoxy-D-xylulose 5-phosphate biosynthesis; 1-deoxy-D-xylulose 5-phosphate from D-glyceraldehyde 3-phosphate and pyruvate: step 1/1. Its function is as follows. Catalyzes the acyloin condensation reaction between C atoms 2 and 3 of pyruvate and glyceraldehyde 3-phosphate to yield 1-deoxy-D-xylulose-5-phosphate (DXP). This Albidiferax ferrireducens (strain ATCC BAA-621 / DSM 15236 / T118) (Rhodoferax ferrireducens) protein is 1-deoxy-D-xylulose-5-phosphate synthase.